A 1315-amino-acid chain; its full sequence is Tetratricopeptide repeat protein 21B (1315 aa).

TPR repeat units lie at residues Arg108 to Ser141, Pro145 to Ile178, Gln192 to Leu225, Ala285 to Gln323, Ala324 to Asn357, Pro492 to Tyr525, Pro563 to Arg596, Leu616 to Thr649, Pro721 to Asp754, Thr756 to Asn788, Leu790 to Ser821, Gly830 to Ile863, Ala883 to Asp916, Lys918 to Asn950, Glu951 to Asn984, Pro1022 to Gly1055, Glu1196 to Cys1229, Lys1231 to Thr1263, and Pro1265 to Tyr1298.

This sequence belongs to the TTC21 family. In terms of assembly, component of the IFT complex A (IFT-A) complex. IFT-A complex is divided into a core subcomplex composed of IFT122:IFT140:WDR19 which is associated with TULP3 and a peripheral subcomplex composed of IFT43:WDR35:TTC21B. Interacts directy with WDR35 and TTC21B. Interacts with TTC25.

The protein resides in the cytoplasm. It is found in the cytoskeleton. Its subcellular location is the cilium axoneme. Functionally, component of the IFT complex A (IFT-A), a complex required for retrograde ciliary transport and entry into cilia of G protein-coupled receptors (GPCRs). Essential for retrograde trafficking of IFT-1, IFT-B and GPCRs. Negatively modulates the SHH signal transduction. The chain is Tetratricopeptide repeat protein 21B (Ttc21b) from Mus musculus (Mouse).